Here is a 474-residue protein sequence, read N- to C-terminus: Replication factor C large subunit (474 aa).

45 to 52 (GPPGCGKT) contacts ATP. Positions 415–468 (DKKTNNKKGKENKTKNTTKKIKEIKETPKKEEVKEPKKQIEKQKSEKKEPKKQM) are enriched in basic and acidic residues. Residues 415–474 (DKKTNNKKGKENKTKNTTKKIKEIKETPKKEEVKEPKKQIEKQKSEKKEPKKQMTLESFF) form a disordered region.

It belongs to the activator 1 small subunits family. RfcL subfamily. As to quaternary structure, heteromultimer composed of small subunits (RfcS) and large subunits (RfcL).

In terms of biological role, part of the RFC clamp loader complex which loads the PCNA sliding clamp onto DNA. In Methanococcus aeolicus (strain ATCC BAA-1280 / DSM 17508 / OCM 812 / Nankai-3), this protein is Replication factor C large subunit.